A 670-amino-acid chain; its full sequence is Outer dynein arm-docking complex subunit 1 (670 aa).

3 coiled-coil regions span residues 9 to 155 (SKEV…RYLN), 183 to 224 (AVRE…EQLH), and 302 to 381 (NFIN…IQLL). Residues 454 to 473 (KMAPLQPPDTLEDPPGFEAS) are disordered. The residue at position 517 (Ser-517) is a Phosphoserine. Disordered stretches follow at residues 526 to 596 (AGSS…ASSG) and 616 to 670 (VGSS…DSRG). Over residues 584–596 (GHVTFGSTSASSG) the composition is skewed to polar residues. Residues 650 to 670 (SSTGPASSTGPGSSTSKDSRG) show a composition bias toward low complexity.

The protein belongs to the ODA1/DCC2 family. As to quaternary structure, component of the outer dynein arm-docking complex along with ODAD2, ODAD3, ODAD4 and CLXN. Interacts with ODAD3. Interacts with ODAD4; this interaction may facilitate the recruitment and/or attachment of outer dynein arm docking complex proteins, including ODAD1, ODAD3, and ODAD4 to ciliary axonemes. Interacts with DNAH9. Interacts with MNS1. Interacts with PIERCE1 and PIERCE2; the interactions link the outer dynein arms docking complex (ODA-DC) to the internal microtubule inner proteins (MIP) in cilium axoneme. In terms of tissue distribution, expressed in nasal epithelial cells. Highly expressed in testis and also detected in lung, brain and kidney.

The protein localises to the cytoplasm. The protein resides in the cytoskeleton. It is found in the cilium axoneme. Functionally, component of the outer dynein arm-docking complex (ODA-DC) that mediates outer dynein arms (ODA) binding onto the doublet microtubule. Involved in mediating assembly of both ODAs and their axonemal docking complex onto ciliary microtubules. This Homo sapiens (Human) protein is Outer dynein arm-docking complex subunit 1.